The sequence spans 273 residues: Outer surface protein A (273 aa).

An N-terminal signal peptide occupies residues 1 to 16 (MKKYLLGIGLILALIA). Cysteine 17 is lipidated: N-palmitoyl cysteine. Cysteine 17 carries the S-diacylglycerol cysteine lipid modification.

It belongs to the OspA lipoprotein family.

The protein localises to the cell outer membrane. It localises to the cell surface. Functionally, induces host (human and mouse) cytokine release by monocyte cell lines via TLR2 and CD14; nonlipidated protein does not stimulate host cells. The protein is Outer surface protein A of Borreliella burgdorferi (strain ATCC 35210 / DSM 4680 / CIP 102532 / B31) (Borrelia burgdorferi).